The following is a 487-amino-acid chain: Acetyl-coenzyme A carboxylase carboxyl transferase subunit beta, chloroplastic (487 aa).

A CoA carboxyltransferase N-terminal domain is found at 223-487; sequence LWIQCDNCYG…FFPLKKNEIK (265 aa). The Zn(2+) site is built by cysteine 227, cysteine 230, cysteine 243, and cysteine 246. A C4-type zinc finger spans residues 227–246; it reads CDNCYGLMYKKVKMNVCEQC.

Belongs to the AccD/PCCB family. In terms of assembly, acetyl-CoA carboxylase is a heterohexamer composed of biotin carboxyl carrier protein, biotin carboxylase and 2 subunits each of ACCase subunit alpha and ACCase plastid-coded subunit beta (accD). It depends on Zn(2+) as a cofactor.

It localises to the plastid. It is found in the chloroplast stroma. The enzyme catalyses N(6)-carboxybiotinyl-L-lysyl-[protein] + acetyl-CoA = N(6)-biotinyl-L-lysyl-[protein] + malonyl-CoA. The protein operates within lipid metabolism; malonyl-CoA biosynthesis; malonyl-CoA from acetyl-CoA: step 1/1. Functionally, component of the acetyl coenzyme A carboxylase (ACC) complex. Biotin carboxylase (BC) catalyzes the carboxylation of biotin on its carrier protein (BCCP) and then the CO(2) group is transferred by the transcarboxylase to acetyl-CoA to form malonyl-CoA. The polypeptide is Acetyl-coenzyme A carboxylase carboxyl transferase subunit beta, chloroplastic (Lepidium virginicum (Virginia pepperweed)).